Consider the following 846-residue polypeptide: Rho GTPase-activating protein 17 (846 aa).

Residues glutamine 14 to glutamate 246 enclose the BAR domain. One can recognise a Rho-GAP domain in the interval threonine 252–phenylalanine 442. The span at threonine 459–glycine 475 shows a compositional bias: polar residues. Residues threonine 459–proline 482 are disordered. Phosphoserine is present on residues serine 484 and serine 575. Residues isoleucine 519 to serine 807 form a disordered region. Over residues arginine 592–histidine 619 the composition is skewed to polar residues. A compositionally biased stretch (pro residues) spans alanine 637 to histidine 650. Over residues glycine 653–glutamine 690 the composition is skewed to low complexity. 2 positions are modified to phosphoserine: serine 698 and serine 700. 2 stretches are compositionally biased toward pro residues: residues isoleucine 704–glutamine 717 and glutamate 726–proline 741. A phosphothreonine mark is found at threonine 730, threonine 734, and threonine 736. An SH3-binding motif is present at residues threonine 730–leucine 743. Serine 739 carries the phosphoserine modification. Threonine 740 is subject to Phosphothreonine. Residues glutamine 746–histidine 757 show a composition bias toward polar residues. Over residues arginine 772 to proline 782 the composition is skewed to pro residues. A compositionally biased stretch (polar residues) spans leucine 791 to serine 807.

As to quaternary structure, component of a complex whose core is composed of ARHGAP17, AMOT, PALS1, PATJ and PARD3/PAR3. Interacts with NHERF1, FNBP1, TRIP10, CAPZA (CAPZA1, CAPZA2 or CAPZA3), CAPZB, CD2AP and SH3KBP1/CIN85.

The protein localises to the membrane. It is found in the cytoplasm. Its subcellular location is the cell junction. The protein resides in the tight junction. Rho GTPase-activating protein involved in the maintenance of tight junction by regulating the activity of CDC42, thereby playing a central role in apical polarity of epithelial cells. Specifically acts as a GTPase activator for the CDC42 GTPase by converting it to an inactive GDP-bound state. The complex formed with AMOT acts by regulating the uptake of polarity proteins at tight junctions, possibly by deciding whether tight junction transmembrane proteins are recycled back to the plasma membrane or sent elsewhere. Participates in the Ca(2+)-dependent regulation of exocytosis, possibly by catalyzing GTPase activity of Rho family proteins and by inducing the reorganization of the cortical actin filaments. Acts as a GTPase activator in vitro for RAC1. The chain is Rho GTPase-activating protein 17 (Arhgap17) from Mus musculus (Mouse).